Reading from the N-terminus, the 130-residue chain is Small ribosomal subunit protein uS11 (130 aa).

It belongs to the universal ribosomal protein uS11 family. As to quaternary structure, part of the 30S ribosomal subunit. Interacts with proteins S7 and S18. Binds to IF-3.

Located on the platform of the 30S subunit, it bridges several disparate RNA helices of the 16S rRNA. Forms part of the Shine-Dalgarno cleft in the 70S ribosome. The chain is Small ribosomal subunit protein uS11 from Bdellovibrio bacteriovorus (strain ATCC 15356 / DSM 50701 / NCIMB 9529 / HD100).